The following is a 433-amino-acid chain: Histidinol dehydrogenase (433 aa).

NAD(+) contacts are provided by Tyr-129, Gln-191, and Asn-214. 3 residues coordinate substrate: Ser-237, Gln-259, and His-262. The Zn(2+) site is built by Gln-259 and His-262. Active-site proton acceptor residues include Glu-326 and His-327. Substrate is bound by residues His-327, Asp-360, Glu-414, and His-419. Asp-360 is a binding site for Zn(2+). His-419 serves as a coordination point for Zn(2+).

It belongs to the histidinol dehydrogenase family. Zn(2+) serves as cofactor.

It carries out the reaction L-histidinol + 2 NAD(+) + H2O = L-histidine + 2 NADH + 3 H(+). It participates in amino-acid biosynthesis; L-histidine biosynthesis; L-histidine from 5-phospho-alpha-D-ribose 1-diphosphate: step 9/9. Its function is as follows. Catalyzes the sequential NAD-dependent oxidations of L-histidinol to L-histidinaldehyde and then to L-histidine. The chain is Histidinol dehydrogenase from Methanosarcina mazei (strain ATCC BAA-159 / DSM 3647 / Goe1 / Go1 / JCM 11833 / OCM 88) (Methanosarcina frisia).